The sequence spans 206 residues: Histidine biosynthesis bifunctional protein HisIE (206 aa).

The interval 1 to 114 (MLKKINFIDI…FQVPSENLFF (114 aa)) is phosphoribosyl-AMP cyclohydrolase. Residues 115 to 206 (LHDLDCMLKF…NLKMRSNKQV (92 aa)) are phosphoribosyl-ATP pyrophosphohydrolase.

It in the N-terminal section; belongs to the PRA-CH family. In the C-terminal section; belongs to the PRA-PH family.

The protein localises to the cytoplasm. The catalysed reaction is 1-(5-phospho-beta-D-ribosyl)-ATP + H2O = 1-(5-phospho-beta-D-ribosyl)-5'-AMP + diphosphate + H(+). The enzyme catalyses 1-(5-phospho-beta-D-ribosyl)-5'-AMP + H2O = 1-(5-phospho-beta-D-ribosyl)-5-[(5-phospho-beta-D-ribosylamino)methylideneamino]imidazole-4-carboxamide. It participates in amino-acid biosynthesis; L-histidine biosynthesis; L-histidine from 5-phospho-alpha-D-ribose 1-diphosphate: step 2/9. The protein operates within amino-acid biosynthesis; L-histidine biosynthesis; L-histidine from 5-phospho-alpha-D-ribose 1-diphosphate: step 3/9. This Buchnera aphidicola subsp. Baizongia pistaciae (strain Bp) protein is Histidine biosynthesis bifunctional protein HisIE (hisI).